The primary structure comprises 327 residues: Phenylalanine--tRNA ligase alpha subunit (327 aa).

A Mg(2+)-binding site is contributed by Glu252.

Belongs to the class-II aminoacyl-tRNA synthetase family. Phe-tRNA synthetase alpha subunit type 1 subfamily. As to quaternary structure, tetramer of two alpha and two beta subunits. Mg(2+) serves as cofactor.

Its subcellular location is the cytoplasm. It catalyses the reaction tRNA(Phe) + L-phenylalanine + ATP = L-phenylalanyl-tRNA(Phe) + AMP + diphosphate + H(+). In Glaesserella parasuis serovar 5 (strain SH0165) (Haemophilus parasuis), this protein is Phenylalanine--tRNA ligase alpha subunit.